Here is a 148-residue protein sequence, read N- to C-terminus: Nucleoside diphosphate kinase 1 (148 aa).

ATP is bound by residues Lys9, Phe57, Arg85, Thr91, Arg102, and Asn112. The Pros-phosphohistidine intermediate role is filled by His115.

Belongs to the NDK family. Mg(2+) is required as a cofactor.

The enzyme catalyses a 2'-deoxyribonucleoside 5'-diphosphate + ATP = a 2'-deoxyribonucleoside 5'-triphosphate + ADP. It catalyses the reaction a ribonucleoside 5'-diphosphate + ATP = a ribonucleoside 5'-triphosphate + ADP. In terms of biological role, major role in the synthesis of nucleoside triphosphates other than ATP. The ATP gamma phosphate is transferred to the NDP beta phosphate via a ping-pong mechanism, using a phosphorylated active-site intermediate. The polypeptide is Nucleoside diphosphate kinase 1 (Nicotiana tabacum (Common tobacco)).